A 66-amino-acid polypeptide reads, in one-letter code: Large ribosomal subunit protein bL33c (66 aa).

In terms of assembly, component of the chloroplast large ribosomal subunit (LSU). Mature 70S chloroplast ribosomes of higher plants consist of a small (30S) and a large (50S) subunit. The 30S small subunit contains 1 molecule of ribosomal RNA (16S rRNA) and 24 different proteins. The 50S large subunit contains 3 rRNA molecules (23S, 5S and 4.5S rRNA) and 33 different proteins.

It is found in the plastid. It localises to the chloroplast. Component of the chloroplast ribosome (chloro-ribosome), a dedicated translation machinery responsible for the synthesis of chloroplast genome-encoded proteins, including proteins of the transcription and translation machinery and components of the photosynthetic apparatus. The protein is Large ribosomal subunit protein bL33c (rpl33) of Spinacia oleracea (Spinach).